Reading from the N-terminus, the 553-residue chain is Formate--tetrahydrofolate ligase (553 aa).

Position 64–71 (64–71 (TPAGEGKT)) interacts with ATP.

The protein belongs to the formate--tetrahydrofolate ligase family.

The catalysed reaction is (6S)-5,6,7,8-tetrahydrofolate + formate + ATP = (6R)-10-formyltetrahydrofolate + ADP + phosphate. Its pathway is one-carbon metabolism; tetrahydrofolate interconversion. This Pseudothermotoga lettingae (strain ATCC BAA-301 / DSM 14385 / NBRC 107922 / TMO) (Thermotoga lettingae) protein is Formate--tetrahydrofolate ligase.